A 317-amino-acid chain; its full sequence is L-lactate dehydrogenase (317 aa).

NAD(+) contacts are provided by residues Val-17, Asp-38, Lys-43, Tyr-68, and 82–83; that span reads GV. Arg-91 lines the substrate pocket. Residues Ser-104, 121–123, and Ser-146 contribute to the NAD(+) site; that span reads VSN. 123-126 lines the substrate pocket; the sequence is NPVD. Residue 151–154 coordinates substrate; it reads DTSR. Positions 156 and 171 each coordinate beta-D-fructose 1,6-bisphosphate. His-178 serves as the catalytic Proton acceptor. Position 224 is a phosphotyrosine (Tyr-224). Position 233 (Thr-233) interacts with substrate.

It belongs to the LDH/MDH superfamily. LDH family. As to quaternary structure, homotetramer.

It localises to the cytoplasm. It catalyses the reaction (S)-lactate + NAD(+) = pyruvate + NADH + H(+). It participates in fermentation; pyruvate fermentation to lactate; (S)-lactate from pyruvate: step 1/1. With respect to regulation, allosterically activated by fructose 1,6-bisphosphate (FBP). In terms of biological role, catalyzes the conversion of lactate to pyruvate. This Clostridium perfringens (strain SM101 / Type A) protein is L-lactate dehydrogenase.